Reading from the N-terminus, the 433-residue chain is Xylose isomerase (433 aa).

Residues His-99 and Asp-102 contribute to the active site. Residues Glu-230, Glu-266, His-269, Asp-294, Asp-305, Asp-307, and Asp-337 each contribute to the Mg(2+) site.

This sequence belongs to the xylose isomerase family. As to quaternary structure, homotetramer. It depends on Mg(2+) as a cofactor.

The protein resides in the cytoplasm. It carries out the reaction alpha-D-xylose = alpha-D-xylulofuranose. The protein is Xylose isomerase of Roseobacter denitrificans (strain ATCC 33942 / OCh 114) (Erythrobacter sp. (strain OCh 114)).